Consider the following 469-residue polypeptide: Sulfate adenylyltransferase subunit 1 (469 aa).

Positions lysine 22–aspartate 236 constitute a tr-type G domain. Positions glycine 31–serine 38 are G1. Residue glycine 31 to serine 38 participates in GTP binding. The G2 stretch occupies residues glycine 89 to aspartate 93. The tract at residues aspartate 110–glycine 113 is G3. Residues aspartate 110–histidine 114 and asparagine 165–aspartate 168 contribute to the GTP site. The G4 stretch occupies residues asparagine 165–aspartate 168. The segment at serine 202 to leucine 204 is G5.

It belongs to the TRAFAC class translation factor GTPase superfamily. Classic translation factor GTPase family. CysN/NodQ subfamily. In terms of assembly, heterodimer composed of CysD, the smaller subunit, and CysN.

It carries out the reaction sulfate + ATP + H(+) = adenosine 5'-phosphosulfate + diphosphate. It functions in the pathway sulfur metabolism; hydrogen sulfide biosynthesis; sulfite from sulfate: step 1/3. In terms of biological role, with CysD forms the ATP sulfurylase (ATPS) that catalyzes the adenylation of sulfate producing adenosine 5'-phosphosulfate (APS) and diphosphate, the first enzymatic step in sulfur assimilation pathway. APS synthesis involves the formation of a high-energy phosphoric-sulfuric acid anhydride bond driven by GTP hydrolysis by CysN coupled to ATP hydrolysis by CysD. The chain is Sulfate adenylyltransferase subunit 1 from Pseudoalteromonas atlantica (strain T6c / ATCC BAA-1087).